A 357-amino-acid polypeptide reads, in one-letter code: Red-sensitive opsin-1 (357 aa).

Over 1–49 (MAEHWGDAIYAARRKGDETTREAMFTYTNSNNTKDPFEGPNYHIAPRWV) the chain is Extracellular. Asparagine 31 carries an N-linked (GlcNAc...) asparagine glycan. A helical membrane pass occupies residues 50-74 (YNVATVWMFFVVVASTFTNGLVLVA). Residues 75 to 86 (TAKFKKLRHPLN) lie on the Cytoplasmic side of the membrane. Residues 87-112 (WILVNLAIADLGETLFASTISVINQF) form a helical membrane-spanning segment. Over 113–126 (FGYFILGHPMCIFE) the chain is Extracellular. Cysteines 123 and 200 form a disulfide. Residues 127 to 146 (GYTVSVCGIAALWSLTVISW) form a helical membrane-spanning segment. Residues 147–165 (ERWVVVCKPFGNVKFDAKW) lie on the Cytoplasmic side of the membrane. A helical transmembrane segment spans residues 166–189 (ASAGIIFSWVWAAAWCAPPIFGWS). Residues 190-215 (RYWPHGLKTSCGPDVFSGSEDPGVQS) lie on the Extracellular side of the membrane. The chain crosses the membrane as a helical span at residues 216 to 243 (YMVVLMITCCIIPLAIIILCYIAVYLAI). The Cytoplasmic segment spans residues 244-265 (HAVAQQQKDSESTQKAEKEVSR). The helical transmembrane segment at 266 to 289 (MVVVMIFAYCFCWGPYTFFACFAA) threads the bilayer. The Extracellular segment spans residues 290 to 297 (ANPGYAFH). A helical transmembrane segment spans residues 298-322 (PLAAAMPAYFAKSATIYNPVIYVFM). Lysine 309 carries the post-translational modification N6-(retinylidene)lysine. Residues 323 to 357 (NRQFRVCIMQLFGKKVDDGSEVSTSKTEVSSVAPA) lie on the Cytoplasmic side of the membrane.

Belongs to the G-protein coupled receptor 1 family. Opsin subfamily. Post-translationally, phosphorylated on some or all of the serine and threonine residues present in the C-terminal region. As to expression, retinal double cone principal photoreceptor cell outer segments.

It localises to the membrane. Its function is as follows. Visual pigments are the light-absorbing molecules that mediate vision. They consist of an apoprotein, opsin, covalently linked to cis-retinal. The polypeptide is Red-sensitive opsin-1 (opn1lw1) (Danio rerio (Zebrafish)).